A 124-amino-acid polypeptide reads, in one-letter code: Holo-[acyl-carrier-protein] synthase (124 aa).

Mg(2+)-binding residues include aspartate 8 and glutamate 56.

It belongs to the P-Pant transferase superfamily. AcpS family. Requires Mg(2+) as cofactor.

Its subcellular location is the cytoplasm. It catalyses the reaction apo-[ACP] + CoA = holo-[ACP] + adenosine 3',5'-bisphosphate + H(+). Functionally, transfers the 4'-phosphopantetheine moiety from coenzyme A to a Ser of acyl-carrier-protein. This chain is Holo-[acyl-carrier-protein] synthase, found in Maridesulfovibrio salexigens (strain ATCC 14822 / DSM 2638 / NCIMB 8403 / VKM B-1763) (Desulfovibrio salexigens).